We begin with the raw amino-acid sequence, 393 residues long: S-adenosylmethionine synthase 2 (393 aa).

E9 serves as a coordination point for Mg(2+). H15 contacts ATP. Residue E43 coordinates K(+). Positions 56 and 99 each coordinate L-methionine. ATP is bound by residues 167–169 (DGK), 235–238 (SGRF), D246, 252–253 (RK), A269, K273, and K277. L-methionine is bound at residue D246. Position 277 (K277) interacts with L-methionine.

It belongs to the AdoMet synthase family. As to quaternary structure, homotetramer. Requires Mn(2+) as cofactor. Mg(2+) serves as cofactor. It depends on Co(2+) as a cofactor. K(+) is required as a cofactor. In terms of tissue distribution, roots and shoots.

The protein resides in the cytoplasm. It catalyses the reaction L-methionine + ATP + H2O = S-adenosyl-L-methionine + phosphate + diphosphate. It participates in amino-acid biosynthesis; S-adenosyl-L-methionine biosynthesis; S-adenosyl-L-methionine from L-methionine: step 1/1. Its function is as follows. Catalyzes the formation of S-adenosylmethionine from methionine and ATP. The reaction comprises two steps that are both catalyzed by the same enzyme: formation of S-adenosylmethionine (AdoMet) and triphosphate, and subsequent hydrolysis of the triphosphate. The polypeptide is S-adenosylmethionine synthase 2 (SAMS2) (Pinus contorta (Shore pine)).